We begin with the raw amino-acid sequence, 196 residues long: Imidazoleglycerol-phosphate dehydratase (196 aa).

This sequence belongs to the imidazoleglycerol-phosphate dehydratase family.

Its subcellular location is the cytoplasm. The enzyme catalyses D-erythro-1-(imidazol-4-yl)glycerol 3-phosphate = 3-(imidazol-4-yl)-2-oxopropyl phosphate + H2O. It functions in the pathway amino-acid biosynthesis; L-histidine biosynthesis; L-histidine from 5-phospho-alpha-D-ribose 1-diphosphate: step 6/9. The polypeptide is Imidazoleglycerol-phosphate dehydratase (Zymomonas mobilis subsp. mobilis (strain ATCC 31821 / ZM4 / CP4)).